The sequence spans 206 residues: Ribosomal RNA small subunit methyltransferase G (206 aa).

S-adenosyl-L-methionine is bound by residues Gly-73, Leu-78, 124-125 (VE), and Arg-139.

Belongs to the methyltransferase superfamily. RNA methyltransferase RsmG family.

The protein localises to the cytoplasm. It carries out the reaction guanosine(527) in 16S rRNA + S-adenosyl-L-methionine = N(7)-methylguanosine(527) in 16S rRNA + S-adenosyl-L-homocysteine. Specifically methylates the N7 position of guanine in position 527 of 16S rRNA. The polypeptide is Ribosomal RNA small subunit methyltransferase G (Yersinia pseudotuberculosis serotype O:1b (strain IP 31758)).